A 468-amino-acid chain; its full sequence is Chromosomal replication initiator protein DnaA (468 aa).

The segment at 1–84 (MSSSLWLQCL…RFEVGSRRVA (84 aa)) is domain I, interacts with DnaA modulators. The segment at 84–131 (AAPKPAPTRTPADVAAESSAPAQLQARKPVHKTWDDDAQVIADINHRS) is domain II. Residues 85–95 (APKPAPTRTPA) are compositionally biased toward low complexity. Residues 85 to 104 (APKPAPTRTPADVAAESSAP) are disordered. Residues 132–348 (NVNPKHKFNN…GALNRVIANA (217 aa)) form a domain III, AAA+ region region. G176, G178, K179, and T180 together coordinate ATP. The segment at 349-468 (NFTGRPITID…YSNLIRTLSS (120 aa)) is domain IV, binds dsDNA.

The protein belongs to the DnaA family. As to quaternary structure, oligomerizes as a right-handed, spiral filament on DNA at oriC.

It is found in the cytoplasm. In terms of biological role, plays an essential role in the initiation and regulation of chromosomal replication. ATP-DnaA binds to the origin of replication (oriC) to initiate formation of the DNA replication initiation complex once per cell cycle. Binds the DnaA box (a 9 base pair repeat at the origin) and separates the double-stranded (ds)DNA. Forms a right-handed helical filament on oriC DNA; dsDNA binds to the exterior of the filament while single-stranded (ss)DNA is stabiized in the filament's interior. The ATP-DnaA-oriC complex binds and stabilizes one strand of the AT-rich DNA unwinding element (DUE), permitting loading of DNA polymerase. After initiation quickly degrades to an ADP-DnaA complex that is not apt for DNA replication. Binds acidic phospholipids. Complements a temperature-sensitive E.coli mutant, the DnaA consensus is 5'-TT(A/T)TNCACA-3'. This is Chromosomal replication initiator protein DnaA from Vibrio harveyi (Beneckea harveyi).